We begin with the raw amino-acid sequence, 180 residues long: Beta-lactoglobulin-1/B (180 aa).

The first 18 residues, 1-18 (MKCLLLALGLALACGVQA), serve as a signal peptide directing secretion. Intrachain disulfides connect Cys84–Cys178, Cys124–Cys137, and Cys124–Cys139.

This sequence belongs to the calycin superfamily. Lipocalin family. In terms of assembly, under physiological conditions beta-lactoglobulin exists as an equilibrium mixture of monomeric and dimeric forms. Post-translationally, alternate disulfide bonds occur in equal amounts.

The protein localises to the secreted. Functionally, lactoglobulin is the primary component of whey, it binds retinol and is probably involved in the transport of that molecule. The protein is Beta-lactoglobulin-1/B of Ovis aries (Sheep).